The chain runs to 428 residues: Autophagy-related protein 14 (428 aa).

A coiled-coil region spans residues 82–143; the sequence is QEAIDRTAEI…RKKQLDKVKD (62 aa).

Belongs to the ATG14 family. Component of the autophagy-specific VPS34 PI3-kinase complex I.

Its subcellular location is the preautophagosomal structure membrane. It is found in the vacuole membrane. Functionally, required for cytoplasm to vacuole transport (Cvt) and autophagy as a part of the autophagy-specific VPS34 PI3-kinase complex I. This complex is essential to recruit the ATG8-phosphatidylinositol conjugate and the ATG12-ATG5 conjugate to the pre-autophagosomal structure. ATG14 mediates the specific binding of the VPS34 PI3-kinase complex I to the preautophagosomal structure (PAS). Plays a crucial role in hyphal development, conidiogenesis and pathogenicity. Also required for glycogen mobilization, quantity of lipid bodies, and the turgor pressure of appressoria. This Pyricularia oryzae (strain 70-15 / ATCC MYA-4617 / FGSC 8958) (Rice blast fungus) protein is Autophagy-related protein 14.